We begin with the raw amino-acid sequence, 384 residues long: WD repeat-containing protein 74 (384 aa).

WD repeat units lie at residues 40 to 80 (RREE…FLSQ), 83 to 122 (CPGG…ASSD), 128 to 168 (KVGP…EPVF), 179 to 220 (DLRV…RRPV), 224 to 266 (TYGE…GCLK), and 267 to 306 (GLAG…GLEH). At serine 214 the chain carries Phosphoserine. Lysine 311 carries the post-translational modification N6-methyllysine. The required for nucleolar and nuclear location stretch occupies residues 320 to 384 (SGRDNWEDEP…KKKRPGSTSP (65 aa)). The disordered stretch occupies residues 323–384 (DNWEDEPQEP…KKKRPGSTSP (62 aa)). Positions 371–384 (QRRKKKKRPGSTSP) are enriched in basic residues.

In terms of assembly, isoform 1 interacts (through WDR repeats) with NVL; the interaction is independent of RNA or pre-60S ribosome particles. Isoform 2 does not interact with NVL. Interacts with MTREX; the interaction dissociation in a late stage of rRNA synthesis is required for appropriate maturation of pre-60S particles and depends on the ATPase activity of NVL.

It is found in the nucleus. Its subcellular location is the nucleolus. Regulatory protein of the MTREX-exosome complex involved in the synthesis of the 60S ribosomal subunit. Participates in an early cleavage of the pre-rRNA processing pathway in cooperation with NVL. Required for blastocyst formation, is necessary for RNA transcription, processing and/or stability during preimplantation development. This Mus musculus (Mouse) protein is WD repeat-containing protein 74 (Wdr74).